A 789-amino-acid chain; its full sequence is Isoamylase SU1, chloroplastic (789 aa).

Residues M1 to A44 constitute a chloroplast transit peptide. D417 acts as the Nucleophile in catalysis. E473 acts as the Proton donor in catalysis.

The protein belongs to the glycosyl hydrolase 13 family.

The protein resides in the plastid. It localises to the chloroplast. The enzyme catalyses Hydrolysis of (1-&gt;6)-alpha-D-glucosidic branch linkages in glycogen, amylopectin and their beta-limit dextrins.. Its pathway is glycan biosynthesis; starch biosynthesis. Its function is as follows. Isoamylase starch-debranching enzyme involved in amylopectin biosynthesis in endosperm. Functions by removing excess branches or improper branches that interfere with the formation of double helices of the cluster chains of amylopectin and crystallization of starch. This is Isoamylase SU1, chloroplastic from Zea mays (Maize).